Here is a 957-residue protein sequence, read N- to C-terminus: Glycine dehydrogenase (decarboxylating) (957 aa).

The residue at position 708 (K708) is an N6-(pyridoxal phosphate)lysine.

Belongs to the GcvP family. The glycine cleavage system is composed of four proteins: P, T, L and H. Pyridoxal 5'-phosphate is required as a cofactor.

It carries out the reaction N(6)-[(R)-lipoyl]-L-lysyl-[glycine-cleavage complex H protein] + glycine + H(+) = N(6)-[(R)-S(8)-aminomethyldihydrolipoyl]-L-lysyl-[glycine-cleavage complex H protein] + CO2. In terms of biological role, the glycine cleavage system catalyzes the degradation of glycine. The P protein binds the alpha-amino group of glycine through its pyridoxal phosphate cofactor; CO(2) is released and the remaining methylamine moiety is then transferred to the lipoamide cofactor of the H protein. The sequence is that of Glycine dehydrogenase (decarboxylating) from Shigella sonnei (strain Ss046).